A 1373-amino-acid chain; its full sequence is DNA-directed RNA polymerase subunit beta (1373 aa).

This sequence belongs to the RNA polymerase beta chain family. The RNAP catalytic core consists of 2 alpha, 1 beta, 1 beta' and 1 omega subunit. When a sigma factor is associated with the core the holoenzyme is formed, which can initiate transcription.

The enzyme catalyses RNA(n) + a ribonucleoside 5'-triphosphate = RNA(n+1) + diphosphate. DNA-dependent RNA polymerase catalyzes the transcription of DNA into RNA using the four ribonucleoside triphosphates as substrates. The chain is DNA-directed RNA polymerase subunit beta from Rickettsia conorii (strain ATCC VR-613 / Malish 7).